The primary structure comprises 638 residues: Chaperone protein HtpG (638 aa).

Residues 1-346 are a; substrate-binding; the sequence is MSQQETHGFQ…SNDLPLNVSR (346 aa). The tract at residues 347–563 is b; that stretch reads EILQDNKVTT…EGEMSTQMIK (217 aa). Residues 564–638 form a c region; that stretch reads LMQAAGQDVP…MNQMLLASVK (75 aa).

Belongs to the heat shock protein 90 family. In terms of assembly, homodimer.

The protein localises to the cytoplasm. In terms of biological role, molecular chaperone. Has ATPase activity. This chain is Chaperone protein HtpG, found in Shewanella pealeana (strain ATCC 700345 / ANG-SQ1).